The sequence spans 42 residues: Alpha-lactalbumin I (42 aa).

The C-type lysozyme domain maps to I1 to V42.

The protein belongs to the glycosyl hydrolase 22 family. Lactose synthase (LS) is a heterodimer of a catalytic component, beta1,4-galactosyltransferase (beta4Gal-T1) and a regulatory component, alpha-lactalbumin (LA). In terms of tissue distribution, mammary gland specific. Secreted in milk.

The protein localises to the secreted. In terms of biological role, regulatory subunit of lactose synthase, changes the substrate specificity of galactosyltransferase in the mammary gland making glucose a good acceptor substrate for this enzyme. This enables LS to synthesize lactose, the major carbohydrate component of milk. In other tissues, galactosyltransferase transfers galactose onto the N-acetylglucosamine of the oligosaccharide chains in glycoproteins. The chain is Alpha-lactalbumin I (LALBA) from Macropus giganteus (Eastern gray kangaroo).